The primary structure comprises 342 residues: Succinylglutamate desuccinylase (342 aa).

Residues histidine 63, glutamate 66, and histidine 155 each coordinate Zn(2+). Glutamate 219 is an active-site residue.

This sequence belongs to the AspA/AstE family. Succinylglutamate desuccinylase subfamily. It depends on Zn(2+) as a cofactor.

The catalysed reaction is N-succinyl-L-glutamate + H2O = L-glutamate + succinate. Its pathway is amino-acid degradation; L-arginine degradation via AST pathway; L-glutamate and succinate from L-arginine: step 5/5. In terms of biological role, transforms N(2)-succinylglutamate into succinate and glutamate. The protein is Succinylglutamate desuccinylase of Vibrio vulnificus (strain CMCP6).